Here is a 201-residue protein sequence, read N- to C-terminus: Retinol-binding protein 4 (201 aa).

The first 18 residues, Met-1–Ala-18, serve as a signal peptide directing secretion. 3 cysteine pairs are disulfide-bonded: Cys-22-Cys-178, Cys-88-Cys-192, and Cys-138-Cys-147. A substrate-binding site is contributed by Gln-116. The residue at position 139 (Arg-139) is an Omega-N-methylarginine.

The protein belongs to the calycin superfamily. Lipocalin family. In terms of assembly, interacts with TTR. Interaction with TTR prevents its loss by filtration through the kidney glomeruli. Interacts with STRA6.

The protein localises to the secreted. Its function is as follows. Retinol-binding protein that mediates retinol transport in blood plasma. Delivers retinol from the liver stores to the peripheral tissues. Transfers the bound all-trans retinol to STRA6, that then facilitates retinol transport across the cell membrane. The protein is Retinol-binding protein 4 (RBP4) of Equus caballus (Horse).